Reading from the N-terminus, the 154-residue chain is 6,7-dimethyl-8-ribityllumazine synthase (154 aa).

Residues F22, 56–58, and 80–82 contribute to the 5-amino-6-(D-ribitylamino)uracil site; these read AFE and AVI. 85-86 contacts (2S)-2-hydroxy-3-oxobutyl phosphate; sequence ST. The active-site Proton donor is H88. F113 serves as a coordination point for 5-amino-6-(D-ribitylamino)uracil. Position 127 (R127) interacts with (2S)-2-hydroxy-3-oxobutyl phosphate.

Belongs to the DMRL synthase family.

The catalysed reaction is (2S)-2-hydroxy-3-oxobutyl phosphate + 5-amino-6-(D-ribitylamino)uracil = 6,7-dimethyl-8-(1-D-ribityl)lumazine + phosphate + 2 H2O + H(+). It functions in the pathway cofactor biosynthesis; riboflavin biosynthesis; riboflavin from 2-hydroxy-3-oxobutyl phosphate and 5-amino-6-(D-ribitylamino)uracil: step 1/2. Catalyzes the formation of 6,7-dimethyl-8-ribityllumazine by condensation of 5-amino-6-(D-ribitylamino)uracil with 3,4-dihydroxy-2-butanone 4-phosphate. This is the penultimate step in the biosynthesis of riboflavin. The chain is 6,7-dimethyl-8-ribityllumazine synthase from Clostridium beijerinckii (strain ATCC 51743 / NCIMB 8052) (Clostridium acetobutylicum).